The primary structure comprises 341 residues: L-threonine 3-dehydrogenase (341 aa).

Residue Cys38 coordinates Zn(2+). Catalysis depends on charge relay system residues Thr40 and His43. Zn(2+) contacts are provided by His63, Glu64, Cys93, Cys96, Cys99, and Cys107. NAD(+)-binding positions include Ile175, Asp195, Arg200, 262-264 (LGI), and 286-287 (IY).

This sequence belongs to the zinc-containing alcohol dehydrogenase family. Homotetramer. Requires Zn(2+) as cofactor.

The protein localises to the cytoplasm. It carries out the reaction L-threonine + NAD(+) = (2S)-2-amino-3-oxobutanoate + NADH + H(+). The protein operates within amino-acid degradation; L-threonine degradation via oxydo-reductase pathway; glycine from L-threonine: step 1/2. In terms of biological role, catalyzes the NAD(+)-dependent oxidation of L-threonine to 2-amino-3-ketobutyrate. The protein is L-threonine 3-dehydrogenase of Yersinia enterocolitica serotype O:8 / biotype 1B (strain NCTC 13174 / 8081).